Consider the following 416-residue polypeptide: Phosphoglycerate kinase (416 aa).

(2R)-3-phosphoglycerate-binding residues include V23, D24, F25, N26, Q38, R39, S62, H63, G65, R66, L121, R122, H168, and R169. G212 contributes to the ADP binding site. G212 serves as a coordination point for CDP. A213 and K214 together coordinate AMP. ATP is bound at residue A213. Residue A213 coordinates Mg(2+). Position 217 (D217) interacts with CDP. D217 contacts Mg(2+). K218 contacts AMP. Residue K218 coordinates ATP. G236 provides a ligand contact to ADP. G236 is a binding site for CDP. Positions 237 and 311 each coordinate AMP. The ATP site is built by G237 and G311. Residues G336 and F341 each contribute to the CDP site. An ADP-binding site is contributed by F341. E342 serves as a coordination point for AMP. 3 residues coordinate ATP: E342, D373, and T374. D373 contacts Mg(2+).

The protein belongs to the phosphoglycerate kinase family. In terms of assembly, monomer. Requires Mg(2+) as cofactor.

It is found in the cytoplasm. The protein resides in the mitochondrion. The enzyme catalyses (2R)-3-phosphoglycerate + ATP = (2R)-3-phospho-glyceroyl phosphate + ADP. The protein operates within carbohydrate degradation; glycolysis; pyruvate from D-glyceraldehyde 3-phosphate: step 2/5. Functionally, catalyzes one of the two ATP producing reactions in the glycolytic pathway via the reversible conversion of 1,3-diphosphoglycerate to 3-phosphoglycerate. Both L- and D- forms of purine and pyrimidine nucleotides can be used as substrates, but the activity is much lower on pyrimidines. Negatively regulates the biosynthesis of acetyl-CoA from pyruvate in the mitochondrion. The polypeptide is Phosphoglycerate kinase (PGK1) (Komagataella pastoris (Yeast)).